We begin with the raw amino-acid sequence, 287 residues long: Uroplakin-3a (287 aa).

The N-terminal stretch at 1 to 18 is a signal peptide; the sequence is MPPLWVVLALGCLRLGSG. The Lumenal portion of the chain corresponds to 19 to 207; it reads VNLQPQLASV…DTWPGRRSGG (189 aa). Residues N74, N139, and N170 are each glycosylated (N-linked (GlcNAc...) asparagine). The helical transmembrane segment at 208 to 235 threads the bilayer; that stretch reads MIVITSILGSLPFFLLIGFAGAIVLSLV. Over 236–287 the chain is Cytoplasmic; it reads DRGDADGATSHDSQITQEAVPKSLGTSEPSYTSVNRGPSLDRAEVYASKLQD. Residues 243–274 form a disordered region; that stretch reads ATSHDSQITQEAVPKSLGTSEPSYTSVNRGPS. Positions 259–271 are enriched in polar residues; it reads LGTSEPSYTSVNR.

The protein belongs to the uroplakin-3 family. As to quaternary structure, heterodimer with uroplakin-1B (UPK1B). Bladder epithelium.

It localises to the endoplasmic reticulum membrane. Functionally, component of the asymmetric unit membrane (AUM); a highly specialized biomembrane elaborated by terminally differentiated urothelial cells. May play an important role in AUM-cytoskeleton interaction in terminally differentiated urothelial cells. It also contributes to the formation of urothelial glycocalyx which may play an important role in preventing bacterial adherence. The protein is Uroplakin-3a (UPK3A) of Bos taurus (Bovine).